The following is a 440-amino-acid chain: Histidinol dehydrogenase (440 aa).

The NAD(+) site is built by Tyr136, Gln197, and Asn220. Substrate is bound by residues Ser243, Gln265, and His268. Zn(2+) is bound by residues Gln265 and His268. Catalysis depends on proton acceptor residues Glu333 and His334. His334, Asp367, Glu421, and His426 together coordinate substrate. Asp367 lines the Zn(2+) pocket. His426 is a binding site for Zn(2+).

This sequence belongs to the histidinol dehydrogenase family. Requires Zn(2+) as cofactor.

It carries out the reaction L-histidinol + 2 NAD(+) + H2O = L-histidine + 2 NADH + 3 H(+). Its pathway is amino-acid biosynthesis; L-histidine biosynthesis; L-histidine from 5-phospho-alpha-D-ribose 1-diphosphate: step 9/9. Its function is as follows. Catalyzes the sequential NAD-dependent oxidations of L-histidinol to L-histidinaldehyde and then to L-histidine. The chain is Histidinol dehydrogenase from Pseudomonas aeruginosa (strain ATCC 15692 / DSM 22644 / CIP 104116 / JCM 14847 / LMG 12228 / 1C / PRS 101 / PAO1).